We begin with the raw amino-acid sequence, 490 residues long: Probable cytochrome P450 308a1 (490 aa).

Position 431 (Cys431) interacts with heme.

The protein belongs to the cytochrome P450 family. Heme serves as cofactor.

It is found in the endoplasmic reticulum membrane. The protein resides in the microsome membrane. May be involved in the metabolism of insect hormones and in the breakdown of synthetic insecticides. This chain is Probable cytochrome P450 308a1 (Cyp308a1), found in Drosophila melanogaster (Fruit fly).